Reading from the N-terminus, the 287-residue chain is ATP synthase gamma chain (287 aa).

Belongs to the ATPase gamma chain family. F-type ATPases have 2 components, CF(1) - the catalytic core - and CF(0) - the membrane proton channel. CF(1) has five subunits: alpha(3), beta(3), gamma(1), delta(1), epsilon(1). CF(0) has three main subunits: a, b and c.

It is found in the cell inner membrane. In terms of biological role, produces ATP from ADP in the presence of a proton gradient across the membrane. The gamma chain is believed to be important in regulating ATPase activity and the flow of protons through the CF(0) complex. This chain is ATP synthase gamma chain, found in Xanthomonas axonopodis pv. citri (strain 306).